A 322-amino-acid chain; its full sequence is CRISPR-associated endonuclease Cas1 (322 aa).

Residues glutamate 149, histidine 214, and glutamate 229 each contribute to the Mn(2+) site.

The protein belongs to the CRISPR-associated endonuclease Cas1 family. Homodimer, forms a heterotetramer with a Cas2 homodimer. The cofactor is Mg(2+). Mn(2+) is required as a cofactor.

Functionally, CRISPR (clustered regularly interspaced short palindromic repeat), is an adaptive immune system that provides protection against mobile genetic elements (viruses, transposable elements and conjugative plasmids). CRISPR clusters contain spacers, sequences complementary to antecedent mobile elements, and target invading nucleic acids. CRISPR clusters are transcribed and processed into CRISPR RNA (crRNA). Acts as a dsDNA endonuclease. Involved in the integration of spacer DNA into the CRISPR cassette. This is CRISPR-associated endonuclease Cas1 from Pyrococcus horikoshii (strain ATCC 700860 / DSM 12428 / JCM 9974 / NBRC 100139 / OT-3).